A 216-amino-acid chain; its full sequence is Nucleoside triphosphate pyrophosphatase (216 aa).

The Proton acceptor role is filled by aspartate 82.

It belongs to the Maf family. A divalent metal cation serves as cofactor.

It localises to the cytoplasm. It catalyses the reaction a ribonucleoside 5'-triphosphate + H2O = a ribonucleoside 5'-phosphate + diphosphate + H(+). The enzyme catalyses a 2'-deoxyribonucleoside 5'-triphosphate + H2O = a 2'-deoxyribonucleoside 5'-phosphate + diphosphate + H(+). Functionally, nucleoside triphosphate pyrophosphatase. May have a dual role in cell division arrest and in preventing the incorporation of modified nucleotides into cellular nucleic acids. The polypeptide is Nucleoside triphosphate pyrophosphatase (Mycobacterium marinum (strain ATCC BAA-535 / M)).